The chain runs to 520 residues: Poly(A)-specific ribonuclease PNLDC1 (520 aa).

The Mg(2+) site is built by Asp-17, Glu-19, Asp-260, and Asp-354. The chain crosses the membrane as a helical span at residues 495–515; the sequence is VNCLLQVCGIVTAWALLAFIL.

It belongs to the CAF1 family. Mg(2+) is required as a cofactor.

The protein resides in the endoplasmic reticulum membrane. It carries out the reaction Exonucleolytic cleavage of poly(A) to 5'-AMP.. Its function is as follows. 3'-exoribonuclease that has a preference for poly(A) tails of mRNAs, thereby efficiently degrading poly(A) tails. Exonucleolytic degradation of the poly(A) tail is often the first step in the decay of eukaryotic mRNAs and is also used to silence certain maternal mRNAs translationally during oocyte maturation and early embryonic development. May act as a regulator of multipotency in embryonic stem cells. Is a critical factor for proper spermatogenesis, involved in pre-piRNAs processing to generate mature piRNAs. This Homo sapiens (Human) protein is Poly(A)-specific ribonuclease PNLDC1.